The sequence spans 431 residues: Probable pectate lyase 1 (431 aa).

A signal peptide spans 1 to 20 (MAVLPTWLLAMMCLLFFVGA). Residues N23, N28, and N65 are each glycosylated (N-linked (GlcNAc...) asparagine). Ca(2+) contacts are provided by D227, D251, and D255. R307 is a catalytic residue.

The protein belongs to the polysaccharide lyase 1 family. Ca(2+) is required as a cofactor. In terms of tissue distribution, expressed in flowers, but not in leaves.

The enzyme catalyses Eliminative cleavage of (1-&gt;4)-alpha-D-galacturonan to give oligosaccharides with 4-deoxy-alpha-D-galact-4-enuronosyl groups at their non-reducing ends.. Its pathway is glycan metabolism; pectin degradation; 2-dehydro-3-deoxy-D-gluconate from pectin: step 2/5. The sequence is that of Probable pectate lyase 1 from Arabidopsis thaliana (Mouse-ear cress).